The sequence spans 206 residues: Thymidylate kinase (206 aa).

11 to 18 (GIDGAGKT) lines the ATP pocket.

This sequence belongs to the thymidylate kinase family.

It carries out the reaction dTMP + ATP = dTDP + ADP. In terms of biological role, phosphorylation of dTMP to form dTDP in both de novo and salvage pathways of dTTP synthesis. The protein is Thymidylate kinase of Burkholderia lata (strain ATCC 17760 / DSM 23089 / LMG 22485 / NCIMB 9086 / R18194 / 383).